The primary structure comprises 467 residues: Glutamate--tRNA ligase (467 aa).

The 'HIGH' region motif lies at P9 to G19. The 'KMSKS' region signature appears at K237–R241. K240 is an ATP binding site.

The protein belongs to the class-I aminoacyl-tRNA synthetase family. Glutamate--tRNA ligase type 1 subfamily. In terms of assembly, monomer.

The protein resides in the cytoplasm. The enzyme catalyses tRNA(Glu) + L-glutamate + ATP = L-glutamyl-tRNA(Glu) + AMP + diphosphate. In terms of biological role, catalyzes the attachment of glutamate to tRNA(Glu) in a two-step reaction: glutamate is first activated by ATP to form Glu-AMP and then transferred to the acceptor end of tRNA(Glu). The sequence is that of Glutamate--tRNA ligase from Xylella fastidiosa (strain 9a5c).